Reading from the N-terminus, the 196-residue chain is Small heat shock protein C3 (196 aa).

The region spanning 88–196 (SAYSSSAIRT…EKDAKEIPIQ (109 aa)) is the sHSP domain.

Belongs to the small heat shock protein (HSP20) family.

The protein is Small heat shock protein C3 (hspc3-1) of Rickettsia felis (strain ATCC VR-1525 / URRWXCal2) (Rickettsia azadi).